We begin with the raw amino-acid sequence, 291 residues long: Small ribosomal subunit protein uS2 (291 aa).

The interval Asn235 to Lys291 is disordered. Over residues Ser270–Lys291 the composition is skewed to acidic residues.

Belongs to the universal ribosomal protein uS2 family.

The chain is Small ribosomal subunit protein uS2 from Treponema denticola (strain ATCC 35405 / DSM 14222 / CIP 103919 / JCM 8153 / KCTC 15104).